The sequence spans 164 residues: CB1 cannabinoid receptor-interacting protein 1 (164 aa).

The protein belongs to the CNRIP family. Interacts with the cannabinoid receptor CNR1 (via C-terminus). Does not interact with cannabinoid receptor CNR2.

In terms of biological role, suppresses cannabinoid receptor CNR1-mediated tonic inhibition of voltage-gated calcium channels. This chain is CB1 cannabinoid receptor-interacting protein 1 (CNRIP1), found in Bos taurus (Bovine).